The primary structure comprises 627 residues: Polyadenylate-binding protein, cytoplasmic and nuclear (627 aa).

Residues 1–11 (MSAADANQVQE) are compositionally biased toward polar residues. Positions 1 to 46 (MSAADANQVQESLEKLNLDSAPVASTEETEQTASGETEEAADSAQV) are disordered. RRM domains lie at 51–129 (ASLY…WSQR), 139–216 (GNIF…KHIS), 232–309 (TNVY…RAQK), and 335–412 (VNLF…LAQR). Low complexity predominate over residues 511-535 (DFNNGANGGRQQRGYYPNRNQNQKG). The disordered stretch occupies residues 511–537 (DFNNGANGGRQQRGYYPNRNQNQKGRQ). A PABC domain is found at 537–618 (QQKDLAAIIA…ALTAFEEYKK (82 aa)).

The protein belongs to the polyadenylate-binding protein type-1 family.

It localises to the cytoplasm. The protein localises to the nucleus. Its function is as follows. Binds the poly(A) tail of mRNA. Appears to be an important mediator of the multiple roles of the poly(A) tail in mRNA biogenesis, stability and translation. In the nucleus, involved in both mRNA cleavage and polyadenylation. Is also required for efficient mRNA export to the cytoplasm. Acts in concert with a poly(A)-specific nuclease (PAN) to affect poly(A) tail shortening, which may occur concomitantly with either nucleocytoplasmic mRNA transport or translational initiation. In the cytoplasm, stimulates translation initiation and regulates mRNA decay through translation termination-coupled poly(A) shortening, probably mediated by PAN. The sequence is that of Polyadenylate-binding protein, cytoplasmic and nuclear (PAB1) from Debaryomyces hansenii (strain ATCC 36239 / CBS 767 / BCRC 21394 / JCM 1990 / NBRC 0083 / IGC 2968) (Yeast).